We begin with the raw amino-acid sequence, 126 residues long: Large-conductance mechanosensitive channel (126 aa).

A run of 3 helical transmembrane segments spans residues 14–34 (VIDLAIGVIIGGAFGKIVTSL), 40–60 (MPLLGLLLGGLDFSALSFTFV), and 67–87 (GLFIQSIVNFFIISFSIFLFI).

This sequence belongs to the MscL family. As to quaternary structure, homopentamer.

The protein resides in the cell membrane. Functionally, channel that opens in response to stretch forces in the membrane lipid bilayer. May participate in the regulation of osmotic pressure changes within the cell. This Bacillus licheniformis (strain ATCC 14580 / DSM 13 / JCM 2505 / CCUG 7422 / NBRC 12200 / NCIMB 9375 / NCTC 10341 / NRRL NRS-1264 / Gibson 46) protein is Large-conductance mechanosensitive channel.